We begin with the raw amino-acid sequence, 182 residues long: Chromophore lyase CpcS/CpeS (182 aa).

It belongs to the CpcS/CpeS biliprotein lyase family.

Covalently attaches a chromophore to Cys residue(s) of phycobiliproteins. This chain is Chromophore lyase CpcS/CpeS, found in Thermosynechococcus vestitus (strain NIES-2133 / IAM M-273 / BP-1).